The sequence spans 398 residues: uncharacterized protein (398 aa).

The disordered stretch occupies residues 313–398 (KTIKSSGSKT…TSKSIKYYEV (86 aa)). Low complexity-rich tracts occupy residues 314–333 (TIKS…TNKS) and 343–398 (GSKT…YYEV).

This is an uncharacterized protein from Acanthamoeba polyphaga mimivirus (APMV).